We begin with the raw amino-acid sequence, 196 residues long: Adenylate kinase (196 aa).

9–17 (GIPGVGKST) contributes to the ATP binding site.

This sequence belongs to the archaeal adenylate kinase family.

Its subcellular location is the cytoplasm. The catalysed reaction is AMP + ATP = 2 ADP. This is Adenylate kinase from Thermococcus kodakarensis (strain ATCC BAA-918 / JCM 12380 / KOD1) (Pyrococcus kodakaraensis (strain KOD1)).